Here is a 157-residue protein sequence, read N- to C-terminus: SsrA-binding protein (157 aa).

Basic and acidic residues predominate over residues histidine 134–arginine 151. Residues histidine 134–glycine 157 form a disordered region.

This sequence belongs to the SmpB family.

The protein localises to the cytoplasm. Required for rescue of stalled ribosomes mediated by trans-translation. Binds to transfer-messenger RNA (tmRNA), required for stable association of tmRNA with ribosomes. tmRNA and SmpB together mimic tRNA shape, replacing the anticodon stem-loop with SmpB. tmRNA is encoded by the ssrA gene; the 2 termini fold to resemble tRNA(Ala) and it encodes a 'tag peptide', a short internal open reading frame. During trans-translation Ala-aminoacylated tmRNA acts like a tRNA, entering the A-site of stalled ribosomes, displacing the stalled mRNA. The ribosome then switches to translate the ORF on the tmRNA; the nascent peptide is terminated with the 'tag peptide' encoded by the tmRNA and targeted for degradation. The ribosome is freed to recommence translation, which seems to be the essential function of trans-translation. The polypeptide is SsrA-binding protein (Rhodopseudomonas palustris (strain BisA53)).